Reading from the N-terminus, the 317-residue chain is Olfactory receptor 5AP2 (317 aa).

At 1–32 (MVRSGKGIQNKNATEVTEFILLGLSDNPDLQG) the chain is on the extracellular side. Residue N12 is glycosylated (N-linked (GlcNAc...) asparagine). A helical transmembrane segment spans residues 33 to 53 (VLFALFLIIYTMTLVGNLGMM). The Cytoplasmic segment spans residues 54–61 (ALIKIDRS). Residues 62–82 (LHTPMYFFLSSLSFVDASYSS) form a helical membrane-spanning segment. At 83-106 (SVTPKMLVNLMAEDKSISFNGCAT) the chain is on the extracellular side. An intrachain disulfide couples C104 to C196. A helical membrane pass occupies residues 107-127 (QFFFFGSFLGTECFLLAMMAY). Topologically, residues 128 to 140 (DRYAAIWNPLLYP) are cytoplasmic. A helical transmembrane segment spans residues 141-161 (VLMSGRICFMLVSTSFLAGFG). Residues 162 to 203 (NAAIHTGMTFRLSFCGSNKINHFYCDTPPLLKLSCSDTHING) lie on the Extracellular side of the membrane. Residues 204–224 (IVIMAFSSFNVISCVLIVLIS) form a helical membrane-spanning segment. The Cytoplasmic segment spans residues 225 to 244 (YLCILIAILKMPSAEGRHKA). Residues 245-265 (FSTCASHLMAVTIFFGTILFM) form a helical membrane-spanning segment. The Extracellular portion of the chain corresponds to 266-278 (YLRPTSSYSMEQD). A helical transmembrane segment spans residues 279–299 (KVVSVFYTVVIPMLNPLIYSL). The Cytoplasmic segment spans residues 300-317 (KNKDVKKAVKKILHNYVV).

This sequence belongs to the G-protein coupled receptor 1 family.

It localises to the cell membrane. Its function is as follows. Odorant receptor. This chain is Olfactory receptor 5AP2, found in Mus musculus (Mouse).